Consider the following 329-residue polypeptide: Urease accessory protein UreD 2 (329 aa).

Positions Tyr-100 to Thr-120 are disordered. The segment covering Pro-103–Thr-120 has biased composition (polar residues).

It belongs to the UreD family. In terms of assembly, ureD, UreF and UreG form a complex that acts as a GTP-hydrolysis-dependent molecular chaperone, activating the urease apoprotein by helping to assemble the nickel containing metallocenter of UreC. The UreE protein probably delivers the nickel.

It is found in the cytoplasm. Its function is as follows. Required for maturation of urease via the functional incorporation of the urease nickel metallocenter. The sequence is that of Urease accessory protein UreD 2 from Psychrobacter cryohalolentis (strain ATCC BAA-1226 / DSM 17306 / VKM B-2378 / K5).